Consider the following 459-residue polypeptide: Cysteine--tRNA ligase (459 aa).

Cysteine 28 is a Zn(2+) binding site. Positions 30 to 40 match the 'HIGH' region motif; it reads VTVYDLCHIGH. Zn(2+)-binding residues include cysteine 209, histidine 234, and glutamate 238. A 'KMSKS' region motif is present at residues 266-270; sequence KMSKS. Lysine 269 serves as a coordination point for ATP.

The protein belongs to the class-I aminoacyl-tRNA synthetase family. Monomer. Zn(2+) is required as a cofactor.

The protein resides in the cytoplasm. The enzyme catalyses tRNA(Cys) + L-cysteine + ATP = L-cysteinyl-tRNA(Cys) + AMP + diphosphate. The chain is Cysteine--tRNA ligase from Shewanella oneidensis (strain ATCC 700550 / JCM 31522 / CIP 106686 / LMG 19005 / NCIMB 14063 / MR-1).